Consider the following 356-residue polypeptide: Peptide chain release factor 1 (356 aa).

Residue glutamine 235 is modified to N5-methylglutamine.

This sequence belongs to the prokaryotic/mitochondrial release factor family. Post-translationally, methylated by PrmC. Methylation increases the termination efficiency of RF1.

It is found in the cytoplasm. In terms of biological role, peptide chain release factor 1 directs the termination of translation in response to the peptide chain termination codons UAG and UAA. In Hydrogenobaculum sp. (strain Y04AAS1), this protein is Peptide chain release factor 1.